A 453-amino-acid polypeptide reads, in one-letter code: Glutamyl-tRNA(Gln) amidotransferase subunit A (453 aa).

Active-site charge relay system residues include K55 and S130. S154 acts as the Acyl-ester intermediate in catalysis.

Belongs to the amidase family. GatA subfamily. As to quaternary structure, heterotrimer of A, B and C subunits.

The enzyme catalyses L-glutamyl-tRNA(Gln) + L-glutamine + ATP + H2O = L-glutaminyl-tRNA(Gln) + L-glutamate + ADP + phosphate + H(+). Its function is as follows. Allows the formation of correctly charged Gln-tRNA(Gln) through the transamidation of misacylated Glu-tRNA(Gln) in organisms which lack glutaminyl-tRNA synthetase. The reaction takes place in the presence of glutamine and ATP through an activated gamma-phospho-Glu-tRNA(Gln). This is Glutamyl-tRNA(Gln) amidotransferase subunit A from Aliarcobacter butzleri (strain RM4018) (Arcobacter butzleri).